The chain runs to 119 residues: ATP-dependent Clp protease adapter protein ClpS (119 aa).

The protein belongs to the ClpS family. As to quaternary structure, binds to the N-terminal domain of the chaperone ClpA.

In terms of biological role, involved in the modulation of the specificity of the ClpAP-mediated ATP-dependent protein degradation. The chain is ATP-dependent Clp protease adapter protein ClpS from Marinobacter nauticus (strain ATCC 700491 / DSM 11845 / VT8) (Marinobacter aquaeolei).